The sequence spans 254 residues: Probable glutathione transferase omega-2 (254 aa).

The GST N-terminal domain maps to 25 to 105 (GTIRIYNMRY…YLDDIYPEPR (81 aa)). Cysteine 35 (nucleophile) is an active-site residue. Glutathione is bound by residues lysine 62, valine 75, and 89–90 (ES). A GST C-terminal domain is found at 110–239 (DHYEKVQQKL…SQPTETAVEF (130 aa)).

The protein belongs to the GST superfamily. Omega family.

The catalysed reaction is RX + glutathione = an S-substituted glutathione + a halide anion + H(+). It carries out the reaction L-dehydroascorbate + 2 glutathione = glutathione disulfide + L-ascorbate. It catalyses the reaction methylarsonate + 2 glutathione + H(+) = methylarsonous acid + glutathione disulfide + H2O. Its function is as follows. Exhibits glutathione-dependent thiol transferase activity. Has dehydroascorbate reductase activity and may contribute to the recycling of ascorbic acid. Participates in the biotransformation of inorganic arsenic and reduces monomethylarsonic acid (MMA). The polypeptide is Probable glutathione transferase omega-2 (gsto-2) (Caenorhabditis elegans).